The sequence spans 291 residues: Homoserine kinase (291 aa).

An ATP-binding site is contributed by 80-90; sequence PLARGLGSSST.

The protein belongs to the GHMP kinase family. Homoserine kinase subfamily.

It is found in the cytoplasm. The catalysed reaction is L-homoserine + ATP = O-phospho-L-homoserine + ADP + H(+). The protein operates within amino-acid biosynthesis; L-threonine biosynthesis; L-threonine from L-aspartate: step 4/5. Functionally, catalyzes the ATP-dependent phosphorylation of L-homoserine to L-homoserine phosphate. The protein is Homoserine kinase of Lactiplantibacillus plantarum (strain ATCC BAA-793 / NCIMB 8826 / WCFS1) (Lactobacillus plantarum).